A 444-amino-acid polypeptide reads, in one-letter code: Methylenetetrahydrofolate--tRNA-(uracil-5-)-methyltransferase TrmFO (444 aa).

Position 9–14 (9–14 (GAGMAG)) interacts with FAD.

This sequence belongs to the MnmG family. TrmFO subfamily. It depends on FAD as a cofactor.

The protein localises to the cytoplasm. It carries out the reaction uridine(54) in tRNA + (6R)-5,10-methylene-5,6,7,8-tetrahydrofolate + NADH + H(+) = 5-methyluridine(54) in tRNA + (6S)-5,6,7,8-tetrahydrofolate + NAD(+). The catalysed reaction is uridine(54) in tRNA + (6R)-5,10-methylene-5,6,7,8-tetrahydrofolate + NADPH + H(+) = 5-methyluridine(54) in tRNA + (6S)-5,6,7,8-tetrahydrofolate + NADP(+). Its function is as follows. Catalyzes the folate-dependent formation of 5-methyl-uridine at position 54 (M-5-U54) in all tRNAs. The chain is Methylenetetrahydrofolate--tRNA-(uracil-5-)-methyltransferase TrmFO from Cereibacter sphaeroides (strain ATCC 17029 / ATH 2.4.9) (Rhodobacter sphaeroides).